A 224-amino-acid polypeptide reads, in one-letter code: Proteasome subunit beta (224 aa).

Residues 1-6 (MDVMKG) constitute a propeptide, removed in mature form; by autocatalysis. The active-site Nucleophile is the Thr7.

This sequence belongs to the peptidase T1B family. As to quaternary structure, the 20S proteasome core is composed of 14 alpha and 14 beta subunits that assemble into four stacked heptameric rings, resulting in a barrel-shaped structure. The two inner rings, each composed of seven catalytic beta subunits, are sandwiched by two outer rings, each composed of seven alpha subunits. The catalytic chamber with the active sites is on the inside of the barrel. Has a gated structure, the ends of the cylinder being occluded by the N-termini of the alpha-subunits. Is capped at one or both ends by the proteasome regulatory ATPase, PAN.

Its subcellular location is the cytoplasm. It carries out the reaction Cleavage of peptide bonds with very broad specificity.. Its activity is regulated as follows. The formation of the proteasomal ATPase PAN-20S proteasome complex, via the docking of the C-termini of PAN into the intersubunit pockets in the alpha-rings, triggers opening of the gate for substrate entry. Interconversion between the open-gate and close-gate conformations leads to a dynamic regulation of the 20S proteasome proteolysis activity. Functionally, component of the proteasome core, a large protease complex with broad specificity involved in protein degradation. The M.jannaschii proteasome is able to cleave oligopeptides after Glu, Asp, Tyr, Phe, Trp, slightly after Arg, but not after Ala. Thus, displays caspase-like and chymotrypsin-like activities and low level of trypsin-like activity. The polypeptide is Proteasome subunit beta (Methanocaldococcus jannaschii (strain ATCC 43067 / DSM 2661 / JAL-1 / JCM 10045 / NBRC 100440) (Methanococcus jannaschii)).